We begin with the raw amino-acid sequence, 620 residues long: Glutathione-regulated potassium-efflux system protein KefC (620 aa).

At 1 to 3 (MDS) the chain is on the periplasmic side. The helical transmembrane segment at 4–24 (HTLLQALIYLGSAALIVPIAV) threads the bilayer. Position 25 (arginine 25) is a topological domain, cytoplasmic. Residues 26 to 46 (LGLGSVLGYLIAGCIIGPWGL) form a helical membrane-spanning segment. Residues 47-53 (RLVTDAE) are Periplasmic-facing. The chain crosses the membrane as a helical span at residues 54 to 74 (SILHFAEIGVVLMLFVIGLEL). Residues 75–89 (DPQRLWKLRASVFGG) lie on the Cytoplasmic side of the membrane. A helical membrane pass occupies residues 90–110 (GALQMVVCGGLIGLFCMFLGL). The Periplasmic segment spans residues 111 to 113 (RWQ). Residues 114–134 (VAELIGMTLALSSTAIAMQAM) form a helical membrane-spanning segment. Residues 135–148 (NERNLTVSQVGRSA) lie on the Cytoplasmic side of the membrane. The chain crosses the membrane as a helical span at residues 149 to 169 (FAVLLFQDIAAIPLVAMIPLL). At 170–177 (AASGASTT) the chain is on the periplasmic side. The chain crosses the membrane as a helical span at residues 178-198 (LGAFALSALKVAGALALVVLL). Topologically, residues 199 to 213 (GRYVTRPALRFVARS) are cytoplasmic. Residues 214 to 233 (GLREVFSAVALFLVFGFGLL) traverse the membrane as a helical segment. The Periplasmic portion of the chain corresponds to 234 to 236 (LEE). The chain crosses the membrane as a helical span at residues 237-254 (VGLSMAMGAFLAGVLLAS). The Cytoplasmic portion of the chain corresponds to 255-269 (SEYRHALESDIEPFK). Residues 270 to 290 (GLLLGLFFIGVGMSIDFGTLV) traverse the membrane as a helical segment. Over 291–293 (ENP) the chain is Periplasmic. Residues 294 to 314 (LRILLLLAGFLAIKIVMLWLV) traverse the membrane as a helical segment. Residues 315–326 (ARTLGVPAKQRR) lie on the Cytoplasmic side of the membrane. The helical transmembrane segment at 327–347 (WFAVLLGQGSEFAFVVFGAAQ) threads the bilayer. At 348 to 358 (MADVLEPEWAK) the chain is on the periplasmic side. A helical membrane pass occupies residues 359–379 (ALTLAVALSMAATPIFLVLLT). Over 380–620 (RMEKTATGEA…ADEPEVKPSI (241 aa)) the chain is Cytoplasmic. Positions 399-518 (QPRVIVAGFG…AGVAMPERET (120 aa)) constitute an RCK N-terminal domain. Positions 599-620 (QGTAEGKHSGKAADEPEVKPSI) are disordered. Over residues 603 to 620 (EGKHSGKAADEPEVKPSI) the composition is skewed to basic and acidic residues.

This sequence belongs to the monovalent cation:proton antiporter 2 (CPA2) transporter (TC 2.A.37) family. KefC subfamily. As to quaternary structure, homodimer. Interacts with the regulatory subunit KefF.

The protein localises to the cell inner membrane. Pore-forming subunit of a potassium efflux system that confers protection against electrophiles. Catalyzes K(+)/H(+) antiport. The protein is Glutathione-regulated potassium-efflux system protein KefC of Salmonella typhi.